A 285-amino-acid chain; its full sequence is Glutamate racemase (285 aa).

Substrate-binding positions include 28 to 29 (DS) and 60 to 61 (YG). C92 acts as the Proton donor/acceptor in catalysis. 93–94 (NT) lines the substrate pocket. C204 acts as the Proton donor/acceptor in catalysis. Residue 205–206 (TH) coordinates substrate.

The protein belongs to the aspartate/glutamate racemases family.

The enzyme catalyses L-glutamate = D-glutamate. It participates in cell wall biogenesis; peptidoglycan biosynthesis. Provides the (R)-glutamate required for cell wall biosynthesis. This is Glutamate racemase from Escherichia coli O7:K1 (strain IAI39 / ExPEC).